The following is a 300-amino-acid chain: MTLAIPLELSLFDPTSADFLVPLISFSAYFSVKSFTMRPCPRLLTRKLNYPGHIPLSPAQNALLAVGSGVVGVLDVTRGDLIASLSESTAGIFLPALHEKMKMTPEGRQIMKDRPEITNKTIEKLKELKRGTLGREYVEWLGGGGLEPESRAPVQYIDSPLLAYTMLRYRQTHDLYHTLFSLPPTLPHELSLKVLEFSNMSLPVALLSSVFGPLRLKRKETWTRDWVPWALRTGREGRSLVTVYWEKRWEQGIGELRRELGVERNDAEGVEARWGGYRKIREVERELRRKGEWVDEPEDW.

Zn(2+) contacts are provided by H173, D174, H177, and E189.

This sequence belongs to the COQ4 family. As to quaternary structure, component of a multi-subunit COQ enzyme complex, composed of at least COQ3, COQ4, COQ5, COQ6, COQ7 and COQ9. Zn(2+) is required as a cofactor.

It localises to the mitochondrion inner membrane. The catalysed reaction is a 4-hydroxy-3-methoxy-5-(all-trans-polyprenyl)benzoate + H(+) = a 2-methoxy-6-(all-trans-polyprenyl)phenol + CO2. It participates in cofactor biosynthesis; ubiquinone biosynthesis. Functionally, lyase that catalyzes the C1-decarboxylation of 4-hydroxy-3-methoxy-5-(all-trans-polyprenyl)benzoic acid into 2-methoxy-6-(all-trans-polyprenyl)phenol during ubiquinone biosynthesis. The polypeptide is Ubiquinone biosynthesis protein COQ4, mitochondrial (Cryptococcus neoformans var. neoformans serotype D (strain JEC21 / ATCC MYA-565) (Filobasidiella neoformans)).